Consider the following 436-residue polypeptide: F-box protein SKIP16 (436 aa).

The region spanning 75 to 111 (RESFRMYPWNLVKRVRLCWDNLKQWLTLNFPEAKATL) is the F-box; degenerate domain. The ApaG domain maps to 295–436 (VSVTNGVQVR…FPLELPDYIF (142 aa)).

In terms of assembly, part of a SCF (ASK-cullin-F-box) protein ligase complex. Interacts with SKP1A/ASK1, SKP1B/ASK2, ASK4, ASK11 and ASK13.

Its pathway is protein modification; protein ubiquitination. Functionally, component of SCF(ASK-cullin-F-box) E3 ubiquitin ligase complexes, which may mediate the ubiquitination and subsequent proteasomal degradation of target proteins. This Arabidopsis thaliana (Mouse-ear cress) protein is F-box protein SKIP16 (SKIP16).